Reading from the N-terminus, the 203-residue chain is GTP cyclohydrolase-2 (203 aa).

49 to 53 (RIHSE) is a GTP binding site. Residues cysteine 54, cysteine 65, and cysteine 67 each coordinate Zn(2+). GTP contacts are provided by residues glutamine 70, 92-94 (EGR), and threonine 114. The active-site Proton acceptor is aspartate 126. Arginine 128 serves as the catalytic Nucleophile. Positions 149 and 154 each coordinate GTP.

Belongs to the GTP cyclohydrolase II family. Requires Zn(2+) as cofactor.

The enzyme catalyses GTP + 4 H2O = 2,5-diamino-6-hydroxy-4-(5-phosphoribosylamino)-pyrimidine + formate + 2 phosphate + 3 H(+). It functions in the pathway cofactor biosynthesis; riboflavin biosynthesis; 5-amino-6-(D-ribitylamino)uracil from GTP: step 1/4. Catalyzes the conversion of GTP to 2,5-diamino-6-ribosylamino-4(3H)-pyrimidinone 5'-phosphate (DARP), formate and pyrophosphate. The protein is GTP cyclohydrolase-2 of Shewanella sp. (strain MR-7).